Here is a 362-residue protein sequence, read N- to C-terminus: Adenosine deaminase (362 aa).

Zn(2+)-binding residues include His-19 and His-21. 3 residues coordinate substrate: His-21, Asp-23, and Gly-181. Zn(2+) is bound at residue His-208. Glu-211 acts as the Proton donor in catalysis. Asp-300 serves as a coordination point for Zn(2+).

It belongs to the metallo-dependent hydrolases superfamily. Adenosine and AMP deaminases family. Adenosine deaminase subfamily. The cofactor is Zn(2+).

It catalyses the reaction adenosine + H2O + H(+) = inosine + NH4(+). It carries out the reaction 2'-deoxyadenosine + H2O + H(+) = 2'-deoxyinosine + NH4(+). Catalyzes the hydrolytic deamination of adenosine and 2-deoxyadenosine. The chain is Adenosine deaminase from Mycobacterium sp. (strain MCS).